The chain runs to 143 residues: Synuclein (143 aa).

3 repeat units span residues 20–30 (EKTKQGVQDAA), 31–41 (EKTKQGVQDAA), and 42–52 (EKTKEGVMYVG). The tract at residues 20–78 (EKTKQGVQDAAEKTKQGVQDAAEKTKEGVMYVGTKTKEGVVQSVNTVTEKTKEQANVVG) is 5 X 11 AA tandem repeats of [EGST]-K-T-K-[EQ]-[GQ]-[VA]-X(4). Residues 53–67 (TKTKEGVVQSVNTVT) form a 4; approximate repeat. The stretch at 68-78 (EKTKEQANVVG) is repeat 5. The segment at 113-143 (REIPAEQVAEGKQTTQEPLVEATEATEETGK) is disordered.

It belongs to the synuclein family. As to expression, nervous system tissue. Found in the electric lobe, the brain and the spinal cord.

Its subcellular location is the nucleus. In terms of biological role, may have a role in synaptic regulation or signal transduction. This is Synuclein from Tetronarce californica (Pacific electric ray).